We begin with the raw amino-acid sequence, 205 residues long: Protein GrpE (205 aa).

Positions 1-18 (MSEEVKNSVETEENKASK) are enriched in basic and acidic residues. A disordered region spans residues 1-60 (MSEEVKNSVETEENKASKDNATQAPNPTENHNTAQETEKAENSEKTESATQENESLDKLK). The segment covering 19 to 35 (DNATQAPNPTENHNTAQ) has biased composition (polar residues). Residues 36-47 (ETEKAENSEKTE) show a composition bias toward basic and acidic residues.

The protein belongs to the GrpE family. Homodimer.

It is found in the cytoplasm. Functionally, participates actively in the response to hyperosmotic and heat shock by preventing the aggregation of stress-denatured proteins, in association with DnaK and GrpE. It is the nucleotide exchange factor for DnaK and may function as a thermosensor. Unfolded proteins bind initially to DnaJ; upon interaction with the DnaJ-bound protein, DnaK hydrolyzes its bound ATP, resulting in the formation of a stable complex. GrpE releases ADP from DnaK; ATP binding to DnaK triggers the release of the substrate protein, thus completing the reaction cycle. Several rounds of ATP-dependent interactions between DnaJ, DnaK and GrpE are required for fully efficient folding. In Chloroherpeton thalassium (strain ATCC 35110 / GB-78), this protein is Protein GrpE.